A 338-amino-acid chain; its full sequence is MSTLRLLISDSYDPWFNLAVEECIFRQMPATQRVLFLWRNADTVVIGRAQNPWKECNTRRMEEDNVRLARRSSGGGAVFHDLGNTCFTFMAGKPEYDKTISTSIVLNALNALGVSAEASGRNDLVVKTAEGDRKVSGSAYRETKDRGFHHGTLLLNADLSRLANYLNPDKKKLAAKGITSVRSRVTNLTELLPGITHEQVCEAITKAFFAHYGERVEAEIISPDKTPDLPNFAEIFARQSSWEWNFGQAPAFSHLLDERFSWGGVELHFDVEKGHITRAQVFTDSLNPAPLEALAGRLQGCLYRADMLQQECEALLVDFPDQEKELRELSTWIAGAVR.

The region spanning proline 29–valine 216 is the BPL/LPL catalytic domain. Residues arginine 71, glycine 76–phenylalanine 79, and lysine 134 each bind ATP. Residue lysine 134 participates in (R)-lipoate binding.

It belongs to the LplA family. In terms of assembly, monomer.

The protein resides in the cytoplasm. The enzyme catalyses L-lysyl-[lipoyl-carrier protein] + (R)-lipoate + ATP = N(6)-[(R)-lipoyl]-L-lysyl-[lipoyl-carrier protein] + AMP + diphosphate + H(+). It participates in protein modification; protein lipoylation via exogenous pathway; protein N(6)-(lipoyl)lysine from lipoate: step 1/2. It functions in the pathway protein modification; protein lipoylation via exogenous pathway; protein N(6)-(lipoyl)lysine from lipoate: step 2/2. Its function is as follows. Catalyzes both the ATP-dependent activation of exogenously supplied lipoate to lipoyl-AMP and the transfer of the activated lipoyl onto the lipoyl domains of lipoate-dependent enzymes. The protein is Lipoate-protein ligase A of Shigella boydii serotype 18 (strain CDC 3083-94 / BS512).